The following is a 341-amino-acid chain: DNA-directed RNA polymerase subunit alpha (341 aa).

Residues 1–237 are alpha N-terminal domain (alpha-NTD); it reads MLSLSKNWNA…EQLQLFISFE (237 aa). Positions 247 to 341 are alpha C-terminal domain (alpha-CTD); the sequence is TDALPFSPYL…LSKRYEDSYN (95 aa).

It belongs to the RNA polymerase alpha chain family. In terms of assembly, homodimer. The RNAP catalytic core consists of 2 alpha, 1 beta, 1 beta' and 1 omega subunit. When a sigma factor is associated with the core the holoenzyme is formed, which can initiate transcription.

The catalysed reaction is RNA(n) + a ribonucleoside 5'-triphosphate = RNA(n+1) + diphosphate. DNA-dependent RNA polymerase catalyzes the transcription of DNA into RNA using the four ribonucleoside triphosphates as substrates. The polypeptide is DNA-directed RNA polymerase subunit alpha (Rickettsia bellii (strain RML369-C)).